Here is a 64-residue protein sequence, read N- to C-terminus: Large ribosomal subunit protein bL28 (64 aa).

It belongs to the bacterial ribosomal protein bL28 family.

In Mycoplasmoides gallisepticum (strain R(low / passage 15 / clone 2)) (Mycoplasma gallisepticum), this protein is Large ribosomal subunit protein bL28.